A 623-amino-acid polypeptide reads, in one-letter code: Glutathione import ATP-binding protein GsiA (623 aa).

2 consecutive ABC transporter domains span residues 15–269 and 314–564; these read VENL…RALL and LRVR…RKLL. ATP-binding positions include 49–56 and 357–364; these read GESGSGKS.

The protein belongs to the ABC transporter superfamily. Glutathione importer (TC 3.A.1.5.11) family. In terms of assembly, the complex is composed of two ATP-binding proteins (GsiA), two transmembrane proteins (GsiC and GsiD) and a solute-binding protein (GsiB).

The protein resides in the cell inner membrane. It carries out the reaction glutathione(out) + ATP + H2O = glutathione(in) + ADP + phosphate + H(+). Its function is as follows. Part of the ABC transporter complex GsiABCD involved in glutathione import. Responsible for energy coupling to the transport system. This chain is Glutathione import ATP-binding protein GsiA, found in Escherichia coli O157:H7.